The sequence spans 271 residues: Norsolorinic acid ketoreductase (271 aa).

The disordered stretch occupies residues 1 to 22 (MNGSLSQHDQERLSTPYRDGPP). Residues I36, N112, Y185, K189, V216, and T218 each contribute to the NADP(+) site. The active-site Proton donor is Y185. The active-site Lowers pKa of active site Tyr is K189.

The protein belongs to the short-chain dehydrogenases/reductases (SDR) family.

It localises to the cytoplasm. The protein localises to the cytosol. Its subcellular location is the vacuole. The catalysed reaction is (1'S)-averantin + NADP(+) = norsolorinic acid + NADPH + H(+). It functions in the pathway mycotoxin biosynthesis; aflatoxin biosynthesis. In terms of biological role, norsolorinic acid ketoreductase; part of the gene cluster that mediates the biosynthesis of aflatoxins, a group of polyketide-derived furanocoumarins, and part of the most toxic and carcinogenic compounds among the known mycotoxins. The four major aflatoxins produced by A.parasiticus are aflatoxin B1 (AFB1), aflatoxin B2 (AFB2), aflatoxin G1 (AFG1) and aflatoxin G2 (AFG2). Within the aflatoxin pathway, the norsolorinic acid ketoreductase aflD performs the second step by catalyzing the dehydration of norsolorinic acid (NOR) to form (1'S)-averantin (AVN). The biosynthesis of aflatoxins begins with the norsolorinic acid synthase aflC that combines a hexanoyl starter unit produced by the fatty acid synthase aflA/aflB and 7 malonyl-CoA extender units to synthesize the precursor NOR. The second step is the conversion of NOR to averantin and requires the norsolorinic acid ketoreductase aflD, which catalyzes the dehydration of norsolorinic acid to form (1'S)-averantin. The norsolorinic acid reductases aflE and aflF may also play a role in the conversion of NOR to AVN. The cytochrome P450 monooxygenase aflG then catalyzes the hydroxylation of AVN to 5'hydroxyaverantin (HAVN). The next step is performed by the 5'-hydroxyaverantin dehydrogenase aflH that transforms HAVN to 5'-oxoaverantin (OAVN) which is further converted to averufin (AVF) by aflK that plays a dual role in the pathway, as a 5'-oxoaverantin cyclase that mediates conversion of 5'-oxoaverantin, as well as a versicolorin B synthase in a later step in the pathway. The averufin oxidase aflI catalyzes the conversion of AVF to versiconal hemiacetal acetate (VHA). VHA is then the substrate for the versiconal hemiacetal acetate esterase aflJ to yield versiconal (VAL). Versicolorin B synthase aflK then converts VAL to versicolorin B (VERB) by closing the bisfuran ring of aflatoxin which is required for DNA-binding, thus giving to aflatoxin its activity as a mutagen. Then, the activity of the versicolorin B desaturase aflL leads to versicolorin A (VERA). A branch point starts from VERB since it can also be converted to dihydrodemethylsterigmatocystin (DMDHST), probably also by aflL, VERA being a precursor for aflatoxins B1 and G1, and DMDHST for aflatoxins B2 and G2. Next, the versicolorin reductase aflM and the cytochrome P450 monooxygenase aflN are involved in conversion of VERA to demethylsterigmatocystin (DMST). AflX and aflY seem also involved in this step, through probable aflX-mediated epoxide ring-opening step following versicolorin A oxidation and aflY-mediated Baeyer-Villiger oxidation required for the formation of the xanthone ring. The methyltransferase aflO then leads to the modification of DMST to sterigmatocystin (ST), and of DMDHST to dihydrosterigmatocystin (DHST). Both ST and DHST are then substrates of the O-methyltransferase aflP to yield O-methylsterigmatocystin (OMST) and dihydro-O-methylsterigmatocystin (DHOMST), respectively. Finally OMST is converted to aflatoxins B1 and G1, and DHOMST to aflatoxins B2 and G2, via the action of several enzymes including O-methylsterigmatocystin oxidoreductase aflQ, the cytochrome P450 monooxygenase aflU, but also the NADH-dependent flavin oxidoreductase nadA which is specifically required for the synthesis of AFG1. The protein is Norsolorinic acid ketoreductase of Aspergillus parasiticus (strain ATCC 56775 / NRRL 5862 / SRRC 143 / SU-1).